A 316-amino-acid polypeptide reads, in one-letter code: Ribose-phosphate pyrophosphokinase (316 aa).

Residues D40–E42 and R99–Q100 each bind ATP. Positions 133 and 174 each coordinate Mg(2+). K197 is an active-site residue. Residues R199, D223, and D227–T231 each bind D-ribose 5-phosphate.

Belongs to the ribose-phosphate pyrophosphokinase family. Class I subfamily. In terms of assembly, homohexamer. The cofactor is Mg(2+).

The protein resides in the cytoplasm. The enzyme catalyses D-ribose 5-phosphate + ATP = 5-phospho-alpha-D-ribose 1-diphosphate + AMP + H(+). It functions in the pathway metabolic intermediate biosynthesis; 5-phospho-alpha-D-ribose 1-diphosphate biosynthesis; 5-phospho-alpha-D-ribose 1-diphosphate from D-ribose 5-phosphate (route I): step 1/1. Functionally, involved in the biosynthesis of the central metabolite phospho-alpha-D-ribosyl-1-pyrophosphate (PRPP) via the transfer of pyrophosphoryl group from ATP to 1-hydroxyl of ribose-5-phosphate (Rib-5-P). The chain is Ribose-phosphate pyrophosphokinase from Fusobacterium nucleatum subsp. nucleatum (strain ATCC 25586 / DSM 15643 / BCRC 10681 / CIP 101130 / JCM 8532 / KCTC 2640 / LMG 13131 / VPI 4355).